Reading from the N-terminus, the 620-residue chain is Delta(14)-sterol reductase LBR (620 aa).

In terms of domain architecture, Tudor spans 1–62 (MPGRKFADGE…DIKPLKSFKQ (62 aa)). Topologically, residues 1 to 215 (MPGRKFADGE…TPQRRDLEFG (215 aa)) are nuclear. A disordered region spans residues 52 to 111 (SDIKPLKSFKQRKSGSTSSSPSRRRSSRSRSRSRSRSPGRAPKGSRRSVSASYQADAKEK). The residue at position 55 (Lys-55) is an N6-acetyllysine. Phosphoserine is present on residues Ser-59 and Ser-67. 2 positions are modified to phosphoserine; by CDK1: Ser-71 and Ser-86. A compositionally biased stretch (basic residues) spans 73–88 (SRRRSSRSRSRSRSRS). Residue Ser-88 is modified to Phosphoserine. O-linked (GlcNAc) serine glycosylation is present at Ser-96. 2 positions are modified to phosphoserine: Ser-99 and Ser-101. Position 123 is a phosphothreonine (Thr-123). Phosphoserine is present on Ser-133. Phosphothreonine is present on Thr-205. 8 consecutive transmembrane segments (helical) span residues 216–236 (GVPGALLIMLGLPACVFLLLL), 263–283 (VCGVYLLWFFLQALFSLLPVG), 304–324 (LYAFILTSAAVGTAVFWDIEL), 331–351 (FLQFALAAIVFSVVLSVYLYA), 452–472 (IIHDGFGFMLAFGDLVWVPFT), 486–506 (DLSWPLTSVIIALKLCGYVIF), 525–547 (LAHLKTIPTSTWKSLLVSGWWGF), and 566–586 (PCGFNHILPYFYVIYFTALLI). Residues Lys-599 and Lys-606 each carry the N6-acetyllysine modification.

The protein belongs to the ERG4/ERG24 family. Interacts with CBX5. Interacts with DNA. Interaction with DNA is sequence independent with higher affinity for supercoiled and relaxed circular DNA than linear DNA. Interacts with lamin B. Interacts with CLNK. Interacts with TMEM147; promoting LBR localization to the nucleus inner membrane. Phosphorylated by CDK1 in mitosis when the inner nuclear membrane breaks down into vesicles that dissociate from the lamina and the chromatin. It is phosphorylated by different protein kinases in interphase when the membrane is associated with these structures. Phosphorylation of LBR and HP1 proteins may be responsible for some of the alterations in chromatin organization and nuclear structure which occur at various times during the cell cycle. Phosphorylated by SRPK1. In late anaphase LBR is dephosphorylated, probably by PP1 and/or PP2A, allowing reassociation with chromatin.

The protein resides in the nucleus inner membrane. Its subcellular location is the nucleus. The protein localises to the cytoplasm. It localises to the endoplasmic reticulum membrane. It catalyses the reaction 5alpha-cholest-8,14-dien-3beta-ol + NADPH + H(+) = 5alpha-cholest-8-en-3beta-ol + NADP(+). The enzyme catalyses 4,4-dimethyl-5alpha-cholesta-8,24-dien-3beta-ol + NADP(+) = 4,4-dimethyl-5alpha-cholesta-8,14,24-trien-3beta-ol + NADPH + H(+). The catalysed reaction is 4,4-dimethyl-8,14-cholestadien-3beta-ol + NADPH + H(+) = 4,4-dimethyl-5alpha-cholest-8-en-3beta-ol + NADP(+). Its pathway is steroid biosynthesis; cholesterol biosynthesis. Its function is as follows. Catalyzes the reduction of the C14-unsaturated bond of lanosterol, as part of the metabolic pathway leading to cholesterol biosynthesis. Plays a critical role in myeloid cell cholesterol biosynthesis which is essential to both myeloid cell growth and functional maturation. Mediates the activation of NADPH oxidases, perhaps by maintaining critical levels of cholesterol required for membrane lipid raft formation during neutrophil differentiation. Anchors the lamina and the heterochromatin to the inner nuclear membrane. This is Delta(14)-sterol reductase LBR (Lbr) from Rattus norvegicus (Rat).